We begin with the raw amino-acid sequence, 94 residues long: Acylphosphatase (94 aa).

One can recognise an Acylphosphatase-like domain in the interval 7–94 (AALVRITGRV…EAPAGFRITR (88 aa)). Residues Arg-22 and Asn-40 contribute to the active site.

Belongs to the acylphosphatase family.

It catalyses the reaction an acyl phosphate + H2O = a carboxylate + phosphate + H(+). The polypeptide is Acylphosphatase (acyP) (Sinorhizobium medicae (strain WSM419) (Ensifer medicae)).